The sequence spans 968 residues: RNA polymerase-associated protein RapA (968 aa).

The 171-residue stretch at 164-334 (DVGRRHAPRV…FARLRLLDPN (171 aa)) folds into the Helicase ATP-binding domain. ATP is bound at residue 177-184 (DEVGLGKT). A DEAH box motif is present at residues 280 to 283 (DEAH). Positions 490–685 (RVEWLMGYLT…ALKAQLEQGR (196 aa)) constitute a Helicase C-terminal domain.

It belongs to the SNF2/RAD54 helicase family. RapA subfamily. As to quaternary structure, interacts with the RNAP. Has a higher affinity for the core RNAP than for the holoenzyme. Its ATPase activity is stimulated by binding to RNAP.

Its function is as follows. Transcription regulator that activates transcription by stimulating RNA polymerase (RNAP) recycling in case of stress conditions such as supercoiled DNA or high salt concentrations. Probably acts by releasing the RNAP, when it is trapped or immobilized on tightly supercoiled DNA. Does not activate transcription on linear DNA. Probably not involved in DNA repair. This chain is RNA polymerase-associated protein RapA, found in Salmonella typhimurium (strain LT2 / SGSC1412 / ATCC 700720).